The chain runs to 539 residues: Membrane protein insertase YidC (539 aa).

5 helical membrane-spanning segments follow: residues 6-26 (TLLV…WQVA), 341-361 (SVIQ…TFIV), 416-436 (LGGC…YWAL), 454-474 (LSAQ…MFLI), and 495-515 (PVMF…YWLV).

It belongs to the OXA1/ALB3/YidC family. Type 1 subfamily. In terms of assembly, interacts with the Sec translocase complex via SecD. Specifically interacts with transmembrane segments of nascent integral membrane proteins during membrane integration.

The protein resides in the cell inner membrane. Required for the insertion and/or proper folding and/or complex formation of integral membrane proteins into the membrane. Involved in integration of membrane proteins that insert both dependently and independently of the Sec translocase complex, as well as at least some lipoproteins. Aids folding of multispanning membrane proteins. In Vibrio vulnificus (strain CMCP6), this protein is Membrane protein insertase YidC.